Reading from the N-terminus, the 660-residue chain is Poly(A)-specific ribonuclease PARN (660 aa).

2 residues coordinate a divalent metal cation: Asp-28 and Glu-30. The R3H domain maps to 177-243 (REFIRSVEEK…ERFIQISKVD (67 aa)). 2 residues coordinate a divalent metal cation: Asp-290 and Asp-380. Ser-560 and Ser-614 each carry phosphoserine. The disordered stretch occupies residues 606 to 660 (ADEGGASVSPVAEEAELDEFSANQSQGKRSRKHKKRKSDASETTPPALFDVPQVW). The span at 633–642 (KRSRKHKKRK) shows a compositional bias: basic residues. Residue Ser-643 is modified to Phosphoserine. Thr-649 bears the Phosphothreonine mark.

It belongs to the CAF1 family. A divalent metal cation is required as a cofactor.

It localises to the cytoplasm. The protein resides in the nucleus. It catalyses the reaction Exonucleolytic cleavage of poly(A) to 5'-AMP.. Functionally, 3'-exoribonuclease that has a preference for poly(A) tails of mRNAs, thereby efficiently degrading poly(A) tails. Exonucleolytic degradation of the poly(A) tail is often the first step in the decay of eukaryotic mRNAs and is also used to silence certain maternal mRNAs translationally during oocyte maturation and early embryonic development. This is Poly(A)-specific ribonuclease PARN (parn) from Danio rerio (Zebrafish).